The chain runs to 366 residues: Peptide chain release factor 2 (366 aa).

Position 249 is an N5-methylglutamine (glutamine 249).

This sequence belongs to the prokaryotic/mitochondrial release factor family. In terms of processing, methylated by PrmC. Methylation increases the termination efficiency of RF2.

It localises to the cytoplasm. In terms of biological role, peptide chain release factor 2 directs the termination of translation in response to the peptide chain termination codons UGA and UAA. In Petrotoga mobilis (strain DSM 10674 / SJ95), this protein is Peptide chain release factor 2.